The primary structure comprises 530 residues: MEPRAVAEAVETGKEDVIMEALRSYNQEHSQSFTFDDAQQEDRKRLAELLVSVLEQGLPPSHRVTWLQSVRILSRDRNCLDPFTSRQSLQALACYADISGSEGSVPDSPDMDVVLESLKCLCNLVLSSPVAQMLAAEARLVVKLTERVGLYRERSFPHDVQFFDLRLLFLLTALRTDVRQQLFQELKGVHLLTDTLELTLAVTPEGNPPKLLPSQETERAMEILKVLFNITLDSIKGEVDEEDAALYRHLGTLLRHCVMIATAGDRTEEFHGHAVNLLGNLPLKCLDVLLTLEPHEDSVEFMGVNMDVIRALLIFLEKRLHQTHRLKESVAPVLSVLTECARMHRPARKFLKAQVLPPLRDVRTRPEVGEMLRNKLVRLMTHLDTDVKRVAAEFLFVLCSESVPRFIKYTGYGNAAGLLAARGLMAGGRPEGQYSEDEDTDTDEYKEAKASINPVTGRVEEKPPNPMEGMTEEQKEHEAMKLVTMFDKLSRNRVIQPMGMSPRGHLTSLQDAMCETMEQQLSSDPDSDPD.

A Phosphoserine modification is found at S435. Residues T440 and T442 each carry the phosphothreonine modification. Phosphoserine occurs at positions 501, 522, 523, and 527.

It belongs to the synembryn family. In terms of assembly, interacts with GDP-bound G alpha proteins GNAI1, GNAO1 and GNAQ, and with GNA13 with lower affinity. Does not interact with G-alpha proteins when they are in complex with subunits beta and gamma. Interacts (via C-terminus) with RGS14; the interaction stimulates the dissociation of the complex between RGS14 and the active GTP-bound form of GNAI1. Interacts with NCS1; interaction is favored in the absence of Ca(2+) and myristoylation of NCS1 is not required. Post-translationally, phosphorylated at Ser-435 and Thr-440 by CK2, stabilizing its interface with G alpha proteins.

It localises to the cytoplasm. The protein resides in the cell cortex. In terms of biological role, chaperone that specifically binds and folds nascent G alpha proteins prior to G protein heterotrimer formation, promoting their stability and activity: folds GNAI1, GNAO1, GNA13 and GNAQ. Does not fold G(s) G-alpha proteins GNAS nor GNAL. Also acts as a guanine nucleotide exchange factor (GEF) for G alpha proteins by stimulating exchange of bound GDP for free GTP. Involved in regulation of microtubule pulling forces during mitotic movement of chromosomes by stimulating G(i)-alpha protein (GNAI1), possibly leading to release G(i)-alpha-GTP and NuMA proteins from the NuMA-GPSM2-G(i)-alpha-GDP complex. Also acts as an activator for G(q)-alpha (GNAQ) protein by enhancing the G(q)-coupled receptor-mediated ERK activation. This is Chaperone Ric-8A (RIC8A) from Macaca fascicularis (Crab-eating macaque).